Reading from the N-terminus, the 239-residue chain is Probable replication-associated protein repA2 (239 aa).

The protein belongs to the IncFII RepA family.

This protein is essential for plasmid replication; it is involved in copy control functions. The protein is Probable replication-associated protein repA2 (repA2) of Buchnera aphidicola subsp. Baizongia pistaciae (strain Bp).